Consider the following 175-residue polypeptide: Large ribosomal subunit protein uL10 (175 aa).

Belongs to the universal ribosomal protein uL10 family. As to quaternary structure, part of the ribosomal stalk of the 50S ribosomal subunit. The N-terminus interacts with L11 and the large rRNA to form the base of the stalk. The C-terminus forms an elongated spine to which L12 dimers bind in a sequential fashion forming a multimeric L10(L12)X complex.

Its function is as follows. Forms part of the ribosomal stalk, playing a central role in the interaction of the ribosome with GTP-bound translation factors. The sequence is that of Large ribosomal subunit protein uL10 (rplJ) from Xylella fastidiosa (strain 9a5c).